A 184-amino-acid polypeptide reads, in one-letter code: Photosystem I assembly protein Ycf4 (184 aa).

The next 2 helical transmembrane spans lie at F22 to S42 and I57 to S77.

Belongs to the Ycf4 family.

The protein localises to the plastid. Its subcellular location is the chloroplast thylakoid membrane. In terms of biological role, seems to be required for the assembly of the photosystem I complex. This is Photosystem I assembly protein Ycf4 from Crucihimalaya wallichii (Rock-cress).